A 235-amino-acid polypeptide reads, in one-letter code: Protein GMH1 homolog (235 aa).

Residues 1–54 (MSRSFRNGFRLLKLSQMDFERAWWDMANLFRAPRRVYRSITLRKQNINRYGRED) lie on the Cytoplasmic side of the membrane. The chain crosses the membrane as a helical span at residues 55 to 75 (FSFIVLFSCMIVISALLWALF). Residues 76–88 (YMNTPKGYVTTIT) are Lumenal-facing. A helical transmembrane segment spans residues 89-109 (FMLFVDFGAVGVIMATMYYFI). Residues 110-140 (AKRFLMKSNDTILSSTDYQLEWNYCFDVHCN) are Cytoplasmic-facing. A helical membrane pass occupies residues 141–161 (SFFPSFVLLYVIQLFLLPVIT). The Lumenal portion of the chain corresponds to 162–175 (RDNFISLFMGNTLY). Residues 176-196 (LVALCYYSYLTFIGYQILPFL) traverse the membrane as a helical segment. Residues 197–201 (KNTHA) lie on the Cytoplasmic side of the membrane. A helical transmembrane segment spans residues 202–222 (LLLPIPMFFIMWALSLLGFNV). Residues 223–235 (PKHVVDVYFGKSA) are Lumenal-facing.

The protein belongs to the unc-50 family.

Its subcellular location is the endoplasmic reticulum membrane. Its function is as follows. Has a role in meiosis. In Schizosaccharomyces pombe (strain 972 / ATCC 24843) (Fission yeast), this protein is Protein GMH1 homolog (mug16).